The chain runs to 896 residues: DNA mismatch repair protein MutS (896 aa).

638–645 is a binding site for ATP; that stretch reads GPNMSGKS.

It belongs to the DNA mismatch repair MutS family.

Functionally, this protein is involved in the repair of mismatches in DNA. It is possible that it carries out the mismatch recognition step. This protein has a weak ATPase activity. In Fusobacterium nucleatum subsp. nucleatum (strain ATCC 25586 / DSM 15643 / BCRC 10681 / CIP 101130 / JCM 8532 / KCTC 2640 / LMG 13131 / VPI 4355), this protein is DNA mismatch repair protein MutS.